Consider the following 331-residue polypeptide: Junctional sarcoplasmic reticulum protein 1 (331 aa).

2 disordered regions span residues 1–118 (MSMT…EELP) and 157–331 (RVPE…KGRD). A mediates interaction with CACNA1S region spans residues 3-76 (MTTRAWEELD…EKEPAARGTP (74 aa)). Composition is skewed to basic and acidic residues over residues 21 to 35 (LEDH…EDRA) and 61 to 71 (TRPKKMEKEPA). Pro residues-rich tracts occupy residues 103-112 (PLQPPPPPPA) and 161-175 (PWVP…PSSP). Composition is skewed to basic and acidic residues over residues 222–242 (AVRE…PRRE) and 250–302 (PRKE…EPRK). Residues 320–331 (SRQKLRAGKGRD) show a composition bias toward basic residues.

Interacts with CACNA1S, CACNB1 and calsequestrin.

It is found in the sarcoplasmic reticulum membrane. Its subcellular location is the endoplasmic reticulum membrane. Its function is as follows. Involved in skeletal muscle excitation/contraction coupling (EC), probably acting as a regulator of the voltage-sensitive calcium channel CACNA1S. EC is a physiological process whereby an electrical signal (depolarization of the plasma membrane) is converted into a chemical signal, a calcium gradient, by the opening of ryanodine receptor calcium release channels. May regulate CACNA1S membrane targeting and activity. The sequence is that of Junctional sarcoplasmic reticulum protein 1 (JSRP1) from Homo sapiens (Human).